A 139-amino-acid chain; its full sequence is Nucleoside diphosphate kinase (139 aa).

Lysine 11, phenylalanine 59, arginine 87, threonine 93, arginine 104, and asparagine 114 together coordinate ATP. Histidine 117 acts as the Pros-phosphohistidine intermediate in catalysis.

The protein belongs to the NDK family. Homotetramer. Mg(2+) is required as a cofactor.

It localises to the cytoplasm. The enzyme catalyses a 2'-deoxyribonucleoside 5'-diphosphate + ATP = a 2'-deoxyribonucleoside 5'-triphosphate + ADP. It carries out the reaction a ribonucleoside 5'-diphosphate + ATP = a ribonucleoside 5'-triphosphate + ADP. Major role in the synthesis of nucleoside triphosphates other than ATP. The ATP gamma phosphate is transferred to the NDP beta phosphate via a ping-pong mechanism, using a phosphorylated active-site intermediate. This chain is Nucleoside diphosphate kinase, found in Moorella thermoacetica (strain ATCC 39073 / JCM 9320).